The primary structure comprises 391 residues: Putative 12-oxophytodienoate reductase 6 (391 aa).

Residues 42 to 44 (PMT), A75, and Q117 contribute to the FMN site. Residue 189-192 (HGAN) coordinates substrate. Catalysis depends on Y194, which acts as the Proton donor. FMN is bound at residue R241. R282 serves as a coordination point for substrate. Residues G312 and 333 to 334 (GR) contribute to the FMN site. Positions 372-391 (YPFLDEHHHDDDDDSNAPSA) are disordered. Over residues 382–391 (DDDDSNAPSA) the composition is skewed to acidic residues.

This sequence belongs to the NADH:flavin oxidoreductase/NADH oxidase family. FMN serves as cofactor.

In terms of biological role, putative oxophytodienoate reductase that may be involved in the biosynthesis or metabolism of oxylipin signaling molecules. The polypeptide is Putative 12-oxophytodienoate reductase 6 (OPR6) (Oryza sativa subsp. japonica (Rice)).